A 415-amino-acid chain; its full sequence is MEADLLIYNIKKIYTPLGNCPQCGSDMENIEEIEDAYIAIKDGKILAAGKSPAAISAKEKIDAKGMIAIPGFVDPHTHLIHYGSRENEVALKLKGYCYVDILKQGGGILSTVNATRNASDDQLIEKAMKSLDIMLSHGTTTVEVKSGYGLSTEEEIRLLRLMNKLNSISLVDIVPTFLGAHSIPTEFKENSWGYVDKIINEMIPKVKEENLAEFCDVFCEDGAFDYEQSKKILEEAKKYGMKLKIHADELTQSGGGELAGILGAVSADHLEEVSEKGIELMKKAGTVGVLLPGVSYFLDRPYANARKLIEKGLAVALGTDYNPGTSPTENLQLIMSFAYIKMKMSAKEILTAVTLNAACAIDRGNEIGTIEKGKKADILLIDVPNLDYVMYHFGINHVNTVIKSKGDKAVVIGVR.

Fe(3+) contacts are provided by His-76 and His-78. Residues His-76 and His-78 each coordinate Zn(2+). 4-imidazolone-5-propanoate contacts are provided by Arg-85, Tyr-148, and His-181. Residue Tyr-148 coordinates N-formimidoyl-L-glutamate. His-246 is a Fe(3+) binding site. His-246 is a binding site for Zn(2+). Residue Glu-249 participates in 4-imidazolone-5-propanoate binding. A Fe(3+)-binding site is contributed by Asp-320. Position 320 (Asp-320) interacts with Zn(2+). Residues Asn-322 and Gly-324 each contribute to the N-formimidoyl-L-glutamate site. Thr-325 contributes to the 4-imidazolone-5-propanoate binding site.

It belongs to the metallo-dependent hydrolases superfamily. HutI family. Zn(2+) is required as a cofactor. Requires Fe(3+) as cofactor.

The protein resides in the cytoplasm. It carries out the reaction 4-imidazolone-5-propanoate + H2O = N-formimidoyl-L-glutamate. It participates in amino-acid degradation; L-histidine degradation into L-glutamate; N-formimidoyl-L-glutamate from L-histidine: step 3/3. Functionally, catalyzes the hydrolytic cleavage of the carbon-nitrogen bond in imidazolone-5-propanoate to yield N-formimidoyl-L-glutamate. It is the third step in the universal histidine degradation pathway. The sequence is that of Imidazolonepropionase from Thermoanaerobacter pseudethanolicus (strain ATCC 33223 / 39E) (Clostridium thermohydrosulfuricum).